We begin with the raw amino-acid sequence, 345 residues long: Eukaryotic translation initiation factor 3 subunit F (345 aa).

Residues 30 to 166 (VVIQPQAIFS…TRAYISAPVG (137 aa)) form the MPN domain. The tract at residues 308-345 (GGESGGAESGAQRGQRGGKGGRGGQQRNQERGAEEARA) is disordered. Positions 322 to 331 (QRGGKGGRGG) are enriched in gly residues. A compositionally biased stretch (basic and acidic residues) spans 335-345 (NQERGAEEARA).

It belongs to the eIF-3 subunit F family. As to quaternary structure, component of the eukaryotic translation initiation factor 3 (eIF-3) complex.

The protein localises to the cytoplasm. Its function is as follows. Component of the eukaryotic translation initiation factor 3 (eIF-3) complex, which is involved in protein synthesis of a specialized repertoire of mRNAs and, together with other initiation factors, stimulates binding of mRNA and methionyl-tRNAi to the 40S ribosome. The eIF-3 complex specifically targets and initiates translation of a subset of mRNAs involved in cell proliferation. The polypeptide is Eukaryotic translation initiation factor 3 subunit F (Aspergillus clavatus (strain ATCC 1007 / CBS 513.65 / DSM 816 / NCTC 3887 / NRRL 1 / QM 1276 / 107)).